The chain runs to 311 residues: D-alanine--D-alanine ligase (311 aa).

One can recognise an ATP-grasp domain in the interval 105–306 (KQLYIHAGLP…FSALLDRLIE (202 aa)). An ATP-binding site is contributed by 133–188 (ADRLGLPVVVKPEHEGSSIGLSIVRNRDQLAAAVETGWQYDRRCLIEKYVHGIEIT). Aspartate 261, glutamate 273, and asparagine 275 together coordinate Mg(2+).

It belongs to the D-alanine--D-alanine ligase family. Requires Mg(2+) as cofactor. The cofactor is Mn(2+).

Its subcellular location is the cytoplasm. It carries out the reaction 2 D-alanine + ATP = D-alanyl-D-alanine + ADP + phosphate + H(+). It participates in cell wall biogenesis; peptidoglycan biosynthesis. Functionally, cell wall formation. In Syntrophobacter fumaroxidans (strain DSM 10017 / MPOB), this protein is D-alanine--D-alanine ligase.